Here is a 149-residue protein sequence, read N- to C-terminus: Large ribosomal subunit protein uL13 (149 aa).

The protein belongs to the universal ribosomal protein uL13 family. As to quaternary structure, part of the 50S ribosomal subunit.

This protein is one of the early assembly proteins of the 50S ribosomal subunit, although it is not seen to bind rRNA by itself. It is important during the early stages of 50S assembly. The protein is Large ribosomal subunit protein uL13 of Chlorobium phaeovibrioides (strain DSM 265 / 1930) (Prosthecochloris vibrioformis (strain DSM 265)).